Reading from the N-terminus, the 530-residue chain is Inactive ubiquitin carboxyl-terminal hydrolase 17-like protein 4 (530 aa).

The 296-residue stretch at 80 to 375 (AGLQNMGNTC…QAYVLFYIQK (296 aa)) folds into the USP domain. Positions 382–392 (SESVSRGREPR) are enriched in basic and acidic residues. 2 disordered regions span residues 382-410 (SESVSRGREPRALGAEDTDRPATQGELKR) and 493-530 (NSTDQESMNTGTLASLQGRTRRSKGKNKHSKRSLLVCQ). The span at 495–510 (TDQESMNTGTLASLQG) shows a compositional bias: polar residues. The span at 511–524 (RTRRSKGKNKHSKR) shows a compositional bias: basic residues.

This sequence belongs to the peptidase C19 family. USP17 subfamily.

The protein localises to the nucleus. It localises to the endoplasmic reticulum. The sequence is that of Inactive ubiquitin carboxyl-terminal hydrolase 17-like protein 4 (USP17L4) from Homo sapiens (Human).